The sequence spans 342 residues: UDP-3-O-acylglucosamine N-acyltransferase (342 aa).

The active-site Proton acceptor is His242.

It belongs to the transferase hexapeptide repeat family. LpxD subfamily. As to quaternary structure, homotrimer.

It carries out the reaction a UDP-3-O-[(3R)-3-hydroxyacyl]-alpha-D-glucosamine + a (3R)-hydroxyacyl-[ACP] = a UDP-2-N,3-O-bis[(3R)-3-hydroxyacyl]-alpha-D-glucosamine + holo-[ACP] + H(+). It functions in the pathway bacterial outer membrane biogenesis; LPS lipid A biosynthesis. Functionally, catalyzes the N-acylation of UDP-3-O-acylglucosamine using 3-hydroxyacyl-ACP as the acyl donor. Is involved in the biosynthesis of lipid A, a phosphorylated glycolipid that anchors the lipopolysaccharide to the outer membrane of the cell. This chain is UDP-3-O-acylglucosamine N-acyltransferase, found in Leptothrix cholodnii (strain ATCC 51168 / LMG 8142 / SP-6) (Leptothrix discophora (strain SP-6)).